We begin with the raw amino-acid sequence, 370 residues long: Small ribosomal subunit biogenesis GTPase RsgA (370 aa).

Residues 111 to 270 enclose the CP-type G domain; sequence RSEGQILAAN…LIDTPGLRGV (160 aa). Residues 158-161 and 212-220 contribute to the GTP site; these read TKAD and GQSGAGKST. Cys-293, Cys-298, His-300, and Cys-306 together coordinate Zn(2+).

The protein belongs to the TRAFAC class YlqF/YawG GTPase family. RsgA subfamily. In terms of assembly, monomer. Associates with 30S ribosomal subunit, binds 16S rRNA. The cofactor is Zn(2+).

Its subcellular location is the cytoplasm. In terms of biological role, one of several proteins that assist in the late maturation steps of the functional core of the 30S ribosomal subunit. Helps release RbfA from mature subunits. May play a role in the assembly of ribosomal proteins into the subunit. Circularly permuted GTPase that catalyzes slow GTP hydrolysis, GTPase activity is stimulated by the 30S ribosomal subunit. The polypeptide is Small ribosomal subunit biogenesis GTPase RsgA (Streptomyces avermitilis (strain ATCC 31267 / DSM 46492 / JCM 5070 / NBRC 14893 / NCIMB 12804 / NRRL 8165 / MA-4680)).